The sequence spans 462 residues: ATP synthase subunit beta (462 aa).

Residue 152–159 coordinates ATP; sequence GGAGVGKT.

This sequence belongs to the ATPase alpha/beta chains family. In terms of assembly, F-type ATPases have 2 components, CF(1) - the catalytic core - and CF(0) - the membrane proton channel. CF(1) has five subunits: alpha(3), beta(3), gamma(1), delta(1), epsilon(1). CF(0) has three main subunits: a(1), b(2) and c(9-12). The alpha and beta chains form an alternating ring which encloses part of the gamma chain. CF(1) is attached to CF(0) by a central stalk formed by the gamma and epsilon chains, while a peripheral stalk is formed by the delta and b chains.

Its subcellular location is the cell inner membrane. It catalyses the reaction ATP + H2O + 4 H(+)(in) = ADP + phosphate + 5 H(+)(out). Functionally, produces ATP from ADP in the presence of a proton gradient across the membrane. The catalytic sites are hosted primarily by the beta subunits. This is ATP synthase subunit beta from Aeromonas hydrophila subsp. hydrophila (strain ATCC 7966 / DSM 30187 / BCRC 13018 / CCUG 14551 / JCM 1027 / KCTC 2358 / NCIMB 9240 / NCTC 8049).